The sequence spans 256 residues: Ribonuclease 3 (256 aa).

The RNase III domain maps to leucine 3–glycine 125. Residue glutamate 38 coordinates Mg(2+). Aspartate 42 is a catalytic residue. Mg(2+)-binding residues include aspartate 111 and glutamate 114. Glutamate 114 is a catalytic residue. Positions aspartate 152 to lysine 222 constitute a DRBM domain. Residues lysine 229–glutamate 256 are disordered.

It belongs to the ribonuclease III family. Homodimer. Requires Mg(2+) as cofactor.

It is found in the cytoplasm. It carries out the reaction Endonucleolytic cleavage to 5'-phosphomonoester.. In terms of biological role, digests double-stranded RNA. Involved in the processing of primary rRNA transcript to yield the immediate precursors to the large and small rRNAs (23S and 16S). Processes some mRNAs, and tRNAs when they are encoded in the rRNA operon. Processes pre-crRNA and tracrRNA of type II CRISPR loci if present in the organism. The polypeptide is Ribonuclease 3 (Cupriavidus taiwanensis (strain DSM 17343 / BCRC 17206 / CCUG 44338 / CIP 107171 / LMG 19424 / R1) (Ralstonia taiwanensis (strain LMG 19424))).